A 477-amino-acid polypeptide reads, in one-letter code: UDP-N-acetylmuramate--L-alanine ligase (477 aa).

118-124 (GTHGKTS) serves as a coordination point for ATP.

This sequence belongs to the MurCDEF family.

It is found in the cytoplasm. The catalysed reaction is UDP-N-acetyl-alpha-D-muramate + L-alanine + ATP = UDP-N-acetyl-alpha-D-muramoyl-L-alanine + ADP + phosphate + H(+). It functions in the pathway cell wall biogenesis; peptidoglycan biosynthesis. Its function is as follows. Cell wall formation. The polypeptide is UDP-N-acetylmuramate--L-alanine ligase (Corynebacterium diphtheriae (strain ATCC 700971 / NCTC 13129 / Biotype gravis)).